The chain runs to 285 residues: ATP synthase gamma chain (285 aa).

Belongs to the ATPase gamma chain family. As to quaternary structure, F-type ATPases have 2 components, CF(1) - the catalytic core - and CF(0) - the membrane proton channel. CF(1) has five subunits: alpha(3), beta(3), gamma(1), delta(1), epsilon(1). CF(0) has three main subunits: a, b and c.

It is found in the cell membrane. In terms of biological role, produces ATP from ADP in the presence of a proton gradient across the membrane. The gamma chain is believed to be important in regulating ATPase activity and the flow of protons through the CF(0) complex. This Geobacillus sp. (strain WCH70) protein is ATP synthase gamma chain.